The chain runs to 86 residues: UPF0147 protein PYRAB16980 (86 aa).

This sequence belongs to the UPF0147 family.

This is UPF0147 protein PYRAB16980 from Pyrococcus abyssi (strain GE5 / Orsay).